The sequence spans 337 residues: Anthranilate phosphoribosyltransferase (337 aa).

Residues Gly81, 84–85, Thr89, 91–94, 109–117, and Thr121 each bind 5-phospho-alpha-D-ribose 1-diphosphate; these read GD, NIST, and KHGNRALSS. An anthranilate-binding site is contributed by Gly81. Ser93 provides a ligand contact to Mg(2+). Asn112 provides a ligand contact to anthranilate. Arg167 contacts anthranilate. Positions 225 and 226 each coordinate Mg(2+).

Belongs to the anthranilate phosphoribosyltransferase family. As to quaternary structure, homodimer. Mg(2+) is required as a cofactor.

It catalyses the reaction N-(5-phospho-beta-D-ribosyl)anthranilate + diphosphate = 5-phospho-alpha-D-ribose 1-diphosphate + anthranilate. It functions in the pathway amino-acid biosynthesis; L-tryptophan biosynthesis; L-tryptophan from chorismate: step 2/5. Catalyzes the transfer of the phosphoribosyl group of 5-phosphorylribose-1-pyrophosphate (PRPP) to anthranilate to yield N-(5'-phosphoribosyl)-anthranilate (PRA). This Rhizobium meliloti (strain 1021) (Ensifer meliloti) protein is Anthranilate phosphoribosyltransferase.